Consider the following 72-residue polypeptide: Translation initiation factor IF-1 (72 aa).

The S1-like domain occupies Met-1–Arg-72.

Belongs to the IF-1 family. In terms of assembly, component of the 30S ribosomal translation pre-initiation complex which assembles on the 30S ribosome in the order IF-2 and IF-3, IF-1 and N-formylmethionyl-tRNA(fMet); mRNA recruitment can occur at any time during PIC assembly.

The protein resides in the cytoplasm. In terms of biological role, one of the essential components for the initiation of protein synthesis. Stabilizes the binding of IF-2 and IF-3 on the 30S subunit to which N-formylmethionyl-tRNA(fMet) subsequently binds. Helps modulate mRNA selection, yielding the 30S pre-initiation complex (PIC). Upon addition of the 50S ribosomal subunit IF-1, IF-2 and IF-3 are released leaving the mature 70S translation initiation complex. The sequence is that of Translation initiation factor IF-1 from Treponema pallidum (strain Nichols).